The sequence spans 413 residues: Elongation factor 1-alpha (413 aa).

The tr-type G domain occupies lysine 5–valine 211. The interval glycine 14–serine 21 is G1. A GTP-binding site is contributed by glycine 14 to serine 21. Residue serine 21 coordinates Mg(2+). The G2 stretch occupies residues glycine 60–aspartate 64. The segment at aspartate 81–glycine 84 is G3. GTP-binding positions include aspartate 81–histidine 85 and asparagine 136–aspartate 139. A G4 region spans residues asparagine 136–aspartate 139. Residues serine 175 to phenylalanine 177 form a G5 region.

The protein belongs to the TRAFAC class translation factor GTPase superfamily. Classic translation factor GTPase family. EF-Tu/EF-1A subfamily.

The protein localises to the cytoplasm. It catalyses the reaction GTP + H2O = GDP + phosphate + H(+). Its function is as follows. GTP hydrolase that promotes the GTP-dependent binding of aminoacyl-tRNA to the A-site of ribosomes during protein biosynthesis. This Methanobrevibacter smithii (strain ATCC 35061 / DSM 861 / OCM 144 / PS) protein is Elongation factor 1-alpha.